Here is a 258-residue protein sequence, read N- to C-terminus: Flap endonuclease Xni (258 aa).

Position 109 (Asp-109) interacts with Mg(2+). Positions 165 to 254 (VKPEQLPDYW…GFNLQDIRYL (90 aa)) constitute a 5'-3' exonuclease domain. K(+)-binding residues include Leu-176, Ala-177, Pro-185, Ile-187, and Ile-190. An interaction with DNA region spans residues 189-194 (GIGPKA).

The protein belongs to the Xni family. It depends on Mg(2+) as a cofactor. K(+) is required as a cofactor.

Its function is as follows. Has flap endonuclease activity. During DNA replication, flap endonucleases cleave the 5'-overhanging flap structure that is generated by displacement synthesis when DNA polymerase encounters the 5'-end of a downstream Okazaki fragment. The protein is Flap endonuclease Xni of Photobacterium profundum (strain SS9).